Here is a 432-residue protein sequence, read N- to C-terminus: 7-dehydrocholesterol reductase (432 aa).

Transmembrane regions (helical) follow at residues 12-34, 64-86, 107-126, 136-155, 195-212, 227-249, 261-283, 287-309, and 371-393; these read YASM…YTMV, LIAW…LLPG, LAAY…FGIF, GEIF…LLYI, FTNC…AVTY, MLVN…AGYW, FYIC…MYLV, VELG…YINY, and SAFF…VIFL.

This sequence belongs to the ERG4/ERG24 family.

It is found in the endoplasmic reticulum membrane. The catalysed reaction is cholesterol + NADP(+) = 7-dehydrocholesterol + NADPH + H(+). It participates in lipid metabolism; steroid biosynthesis. Its function is as follows. Production of cholesterol by reduction of C7-C8 double bond of 7-dehydrocholesterol (7-DHC). Lesions in the gene coding for the enzyme cause dwarfism. In Arabidopsis thaliana (Mouse-ear cress), this protein is 7-dehydrocholesterol reductase (DWF5).